Here is a 1222-residue protein sequence, read N- to C-terminus: Serine/threonine-protein kinase WNK4 (1222 aa).

The span at 1–17 (MLAPRNTETGVPMSQTE) shows a compositional bias: polar residues. Residues 1–165 (MLAPRNTETG…DTETQAVATS (165 aa)) are disordered. A compositionally biased stretch (low complexity) spans 90-101 (AGPTRSPPSSSK). Position 95 is a phosphoserine (Ser95). A compositionally biased stretch (basic and acidic residues) spans 135–152 (EPPRVPDAAARERRREQE). Residues Lys154 and Lys172 each participate in a glycyl lysine isopeptide (Lys-Gly) (interchain with G-Cter in ubiquitin) cross-link. A Protein kinase domain is found at 171 to 429 (LKFDIEIGRG…IQDLLAHAFF (259 aa)). Ser181 contributes to the ATP binding site. Residues Lys183, Lys223, and Lys238 each participate in a glycyl lysine isopeptide (Lys-Gly) (interchain with G-Cter in ubiquitin) cross-link. Residues 251-254 (TELM) and Lys301 contribute to the ATP site. Asp318 (proton acceptor) is an active-site residue. Lys325 is covalently cross-linked (Glycyl lysine isopeptide (Lys-Gly) (interchain with G-Cter in ubiquitin)). Residues Ser328 and Ser332 each carry the phosphoserine; by autocatalysis modification. Glycyl lysine isopeptide (Lys-Gly) (interchain with G-Cter in ubiquitin) cross-links involve residues Lys384, Lys390, Lys447, and Lys451. Residues 525–562 (RELEVLPPDSGPPPATVSLAPGPPSAFPPEPEEPEADQ) are disordered. A compositionally biased stretch (pro residues) spans 533-553 (DSGPPPATVSLAPGPPSAFPP). Residues 554 to 564 (EPEEPEADQHQ) form an interaction with KLHL3 region. Ser572 carries the phosphoserine modification. 4 disordered regions span residues 626–659 (RSGP…MRKN), 747–809 (DAGP…GAPF), 877–896 (SYPQ…SPPS), and 927–976 (SPGL…AQPL). 4 stretches are compositionally biased toward low complexity: residues 627–638 (SGPGSDFSPGDS), 757–769 (ALSP…ALPA), 793–807 (STSP…SPGA), and 877–890 (SYPQ…SLPV). Pro residues predominate over residues 935–944 (PPAPPGPLPS). Residues 953 to 963 (DQESLSAQTAE) show a composition bias toward polar residues. Residue Lys990 forms a Glycyl lysine isopeptide (Lys-Gly) (interchain with G-Cter in ubiquitin) linkage. The RFXV motif signature appears at 996–999 (RFQV). The interval 1000-1087 (TSSKEPAEPP…SSPILSHPSP (88 aa)) is disordered. At Ser1014 the chain carries Phosphoserine. Residues 1014–1032 (SPTLSRSLKLPSPPLTSES) show a composition bias toward low complexity. Residues 1044 to 1056 (ETREALAESDRAA) show a composition bias toward basic and acidic residues. Glycyl lysine isopeptide (Lys-Gly) (interchain with G-Cter in ubiquitin) cross-links involve residues Lys1123, Lys1136, and Lys1137. Residues 1166-1222 (RRLSKGSFPTSRRNSLQRSDLPGPGIMRRNSLSGSSTGSQEQRASKGVTFAGDIGRM) form a disordered region. Composition is skewed to polar residues over residues 1172–1183 (SFPTSRRNSLQR) and 1195–1207 (NSLS…SQEQ). Ser1196 carries the phosphoserine modification.

Belongs to the protein kinase superfamily. Ser/Thr protein kinase family. WNK subfamily. Interacts with the C-terminal region of KCNJ1. Interacts with WNK1 and WNK3. Interacts with KLHL3. The cofactor is Mg(2+). Post-translationally, autophosphorylated at Ser-328 and Ser-332, promoting its activation. Phosphorylated by WNK1 and WNK3. Phosphorylated at Ser-572 in a MAP3K15/ASK3-dependent process in response to osmotic stress or hypotonic low-chloride stimulation. Ubiquitinated by the BCR(KLHL3) complex, leading to its degradation. Also ubiquitinated by the BCR(KLHL2) complex. Locates to the distal convoluted tubule, the medullary collecting duct and the cortical collecting duct of the kidney. Expressed in pancreatic duct.

The protein localises to the cell junction. The protein resides in the tight junction. The enzyme catalyses L-seryl-[protein] + ATP = O-phospho-L-seryl-[protein] + ADP + H(+). The catalysed reaction is L-threonyl-[protein] + ATP = O-phospho-L-threonyl-[protein] + ADP + H(+). Its activity is regulated as follows. Activation requires autophosphorylation of Ser-328 and Ser-332. Autophosphorylation and subsequent activation is inhibited by increases in intracellular ionic strength: Cl(-) potently inhibits WNK4 kinase activity via direct binding. Also inhibited by K(+) ions. Its function is as follows. Serine/threonine-protein kinase component of the WNK4-SPAK/OSR1 kinase cascade, which acts as a key regulator of ion transport in the distal nephron and blood pressure. The WNK4-SPAK/OSR1 kinase cascade is composed of WNK4, which mediates phosphorylation and activation of downstream kinases OXSR1/OSR1 and STK39/SPAK. Following activation, OXSR1/OSR1 and STK39/SPAK catalyze phosphorylation of ion cotransporters, such as SLC12A1/NKCC2, SLC12A2/NKCC1, SLC12A3/NCC, SLC12A5/KCC2 or SLC12A6/KCC3, regulating their activity. Acts as a molecular switch that regulates the balance between renal salt reabsorption and K(+) secretion by modulating the activities of renal transporters and channels, including the Na-Cl cotransporter SLC12A3/NCC and the K(+) channel, KCNJ1/ROMK. Regulates NaCl reabsorption in the distal nephron by activating the thiazide-sensitive Na-Cl cotransporter SLC12A3/NCC in distal convoluted tubule cells of kidney: activates SLC12A3/NCC in a OXSR1/OSR1- and STK39/SPAK-dependent process. Also acts as a scaffold protein independently of its protein kinase activity: negatively regulates cell membrane localization of various transporters and channels (CFTR, KCNJ1/ROMK, SLC4A4, SLC26A9 and TRPV4) by clathrin-dependent endocytosis. Also inhibits the activity of the epithelial Na(+) channel (ENaC) SCNN1A, SCNN1B, SCNN1D in a inase-independent mechanism. May also phosphorylate NEDD4L. This chain is Serine/threonine-protein kinase WNK4, found in Mus musculus (Mouse).